We begin with the raw amino-acid sequence, 347 residues long: NADH-ubiquinone oxidoreductase chain 2 (347 aa).

Helical transmembrane passes span 3–23, 25–45, 59–79, 96–116, 122–142, 149–169, 178–198, 200–220, 240–260, 274–294, and 326–346; these read PMTS…VLMS, HWFM…PILM, YFLT…INLM, TLIT…FWVP, VSLS…LSLL, INTN…GWGG, IMAY…IYNP, LSLL…MLLI, ITTM…LTGF, NSVI…FFYM, and MTML…FISL.

Belongs to the complex I subunit 2 family. Core subunit of respiratory chain NADH dehydrogenase (Complex I) which is composed of 45 different subunits. Interacts with TMEM242.

It localises to the mitochondrion inner membrane. The enzyme catalyses a ubiquinone + NADH + 5 H(+)(in) = a ubiquinol + NAD(+) + 4 H(+)(out). Its function is as follows. Core subunit of the mitochondrial membrane respiratory chain NADH dehydrogenase (Complex I) which catalyzes electron transfer from NADH through the respiratory chain, using ubiquinone as an electron acceptor. Essential for the catalytic activity and assembly of complex I. The sequence is that of NADH-ubiquinone oxidoreductase chain 2 from Sylvisorex granti (Grant's forest shrew).